The sequence spans 391 residues: Putative neutrophil cytosol factor 1B (391 aa).

A PX domain is found at Met1–Leu126. SH3 domains lie at Ile157 to Ser216 and Tyr227 to Gln286. The interval Gln286–Val391 is disordered. Ser304 and Ser305 each carry phosphoserine. The segment covering His310–Arg319 has biased composition (basic residues). 4 positions are modified to phosphoserine: Ser321, Ser329, Ser346, and Ser349.

The protein localises to the cytoplasm. Its function is as follows. May be required for activation of the latent NADPH oxidase (necessary for superoxide production). The sequence is that of Putative neutrophil cytosol factor 1B (NCF1B) from Homo sapiens (Human).